Here is a 361-residue protein sequence, read N- to C-terminus: Tetraacyldisaccharide 4'-kinase (361 aa).

68–75 contacts ATP; that stretch reads TVGGTGKT.

It belongs to the LpxK family.

The enzyme catalyses a lipid A disaccharide + ATP = a lipid IVA + ADP + H(+). It functions in the pathway glycolipid biosynthesis; lipid IV(A) biosynthesis; lipid IV(A) from (3R)-3-hydroxytetradecanoyl-[acyl-carrier-protein] and UDP-N-acetyl-alpha-D-glucosamine: step 6/6. Functionally, transfers the gamma-phosphate of ATP to the 4'-position of a tetraacyldisaccharide 1-phosphate intermediate (termed DS-1-P) to form tetraacyldisaccharide 1,4'-bis-phosphate (lipid IVA). This is Tetraacyldisaccharide 4'-kinase from Pelobacter propionicus (strain DSM 2379 / NBRC 103807 / OttBd1).